A 238-amino-acid polypeptide reads, in one-letter code: NADH-quinone oxidoreductase subunit C (238 aa).

The segment at 1–20 (MSSPDQNPSDAAGQTGSSNE) is disordered.

This sequence belongs to the complex I 30 kDa subunit family. NDH-1 is composed of 14 different subunits. Subunits NuoB, C, D, E, F, and G constitute the peripheral sector of the complex.

It localises to the cell membrane. The enzyme catalyses a quinone + NADH + 5 H(+)(in) = a quinol + NAD(+) + 4 H(+)(out). Its function is as follows. NDH-1 shuttles electrons from NADH, via FMN and iron-sulfur (Fe-S) centers, to quinones in the respiratory chain. The immediate electron acceptor for the enzyme in this species is believed to be a menaquinone. Couples the redox reaction to proton translocation (for every two electrons transferred, four hydrogen ions are translocated across the cytoplasmic membrane), and thus conserves the redox energy in a proton gradient. This is NADH-quinone oxidoreductase subunit C from Mycobacterium marinum (strain ATCC BAA-535 / M).